We begin with the raw amino-acid sequence, 1755 residues long: Transposon Ty1-JR1 Gag-Pol polyprotein (1755 aa).

The span at 1–16 (MESQQLSQHSHISHGS) shows a compositional bias: low complexity. Disordered stretches follow at residues 1–93 (MESQ…MMTQ), 126–173 (PQSQ…RPPP), and 352–421 (GSRN…SKST). Polar residues-rich tracts occupy residues 48 to 60 (TKAN…TPAS) and 127 to 152 (QSQF…GNTF). The span at 153 to 165 (TDSSSADSDMTST) shows a compositional bias: low complexity. Residues 299–401 (NNGIHINNKV…NSKSKTARAH (103 aa)) are RNA-binding. The segment covering 402 to 418 (NVSTSNNSPSTDNDSIS) has biased composition (low complexity). The residue at position 416 (Ser416) is a Phosphoserine. Residue Asp461 is the For protease activity; shared with dimeric partner of the active site. The integrase-type zinc finger-like stretch occupies residues 583–640 (NVHTSESTRKYPYPFIHRMLAHANAQTIRYSLKNNTITYFNESDVDWSSAIDYQCPDC). The 176-residue stretch at 660 to 835 (NSYEPFQYLH…AGLDISTLLP (176 aa)) folds into the Integrase catalytic domain. Mg(2+)-binding residues include Asp671 and Asp736. Disordered stretches follow at residues 956–1087 (SKAV…ETEK), 1092–1111 (RSPS…NIVP), and 1130–1186 (DLPL…EDNE). Positions 960–969 (SPTDSTPPST) are enriched in low complexity. Residues 1005–1015 (STPQISNIEST) are compositionally biased toward polar residues. Residues 1038 to 1053 (ESSHASKSKDFRHSDS) show a composition bias toward basic and acidic residues. Polar residues-rich tracts occupy residues 1054 to 1082 (YSEN…QISD) and 1101 to 1111 (PENNSSHNIVP). Residues 1178 to 1212 (KKRSLEDNETEIKVSRDTWNTKNMRSLEPPRSKKR) carry the Bipartite nuclear localization signal motif. A Reverse transcriptase Ty1/copia-type domain is found at 1338–1476 (NNYYITQLDI…DILGLEIKYQ (139 aa)). The Mg(2+) site is built by Asp1346, Asp1427, Asp1428, Asp1610, Glu1652, and Asp1685. In terms of domain architecture, RNase H Ty1/copia-type spans 1610 to 1752 (DASYGNQPYY…IKTFKLLTNK (143 aa)).

In terms of assembly, the capsid protein forms a homotrimer, from which the VLPs are assembled. The protease is a homodimer, whose active site consists of two apposed aspartic acid residues. Post-translationally, initially, virus-like particles (VLPs) are composed of the structural unprocessed proteins Gag and Gag-Pol, and also contain the host initiator methionine tRNA (tRNA(i)-Met) which serves as a primer for minus-strand DNA synthesis, and a dimer of genomic Ty RNA. Processing of the polyproteins occurs within the particle and proceeds by an ordered pathway, called maturation. First, the protease (PR) is released by autocatalytic cleavage of the Gag-Pol polyprotein yielding capsid protein p45 and a Pol-p154 precursor protein. This cleavage is a prerequisite for subsequent processing of Pol-p154 at the remaining sites to release the mature structural and catalytic proteins. Maturation takes place prior to the RT reaction and is required to produce transposition-competent VLPs.

Its subcellular location is the cytoplasm. The protein resides in the nucleus. The catalysed reaction is DNA(n) + a 2'-deoxyribonucleoside 5'-triphosphate = DNA(n+1) + diphosphate. It carries out the reaction Endonucleolytic cleavage to 5'-phosphomonoester.. In terms of biological role, capsid protein (CA) is the structural component of the virus-like particle (VLP), forming the shell that encapsulates the retrotransposons dimeric RNA genome. The particles are assembled from trimer-clustered units and there are holes in the capsid shells that allow for the diffusion of macromolecules. CA also has nucleocapsid-like chaperone activity, promoting primer tRNA(i)-Met annealing to the multipartite primer-binding site (PBS), dimerization of Ty1 RNA and initiation of reverse transcription. Functionally, the aspartyl protease (PR) mediates the proteolytic cleavages of the Gag and Gag-Pol polyproteins after assembly of the VLP. Its function is as follows. Reverse transcriptase/ribonuclease H (RT) is a multifunctional enzyme that catalyzes the conversion of the retro-elements RNA genome into dsDNA within the VLP. The enzyme displays a DNA polymerase activity that can copy either DNA or RNA templates, and a ribonuclease H (RNase H) activity that cleaves the RNA strand of RNA-DNA heteroduplexes during plus-strand synthesis and hydrolyzes RNA primers. The conversion leads to a linear dsDNA copy of the retrotransposon that includes long terminal repeats (LTRs) at both ends. Integrase (IN) targets the VLP to the nucleus, where a subparticle preintegration complex (PIC) containing at least integrase and the newly synthesized dsDNA copy of the retrotransposon must transit the nuclear membrane. Once in the nucleus, integrase performs the integration of the dsDNA into the host genome. The sequence is that of Transposon Ty1-JR1 Gag-Pol polyprotein (TY1B-JR1) from Saccharomyces cerevisiae (strain ATCC 204508 / S288c) (Baker's yeast).